Here is a 470-residue protein sequence, read N- to C-terminus: ATP synthase subunit beta (470 aa).

ATP is bound at residue 155–162 (GGAGVGKT).

Belongs to the ATPase alpha/beta chains family. F-type ATPases have 2 components, CF(1) - the catalytic core - and CF(0) - the membrane proton channel. CF(1) has five subunits: alpha(3), beta(3), gamma(1), delta(1), epsilon(1). CF(0) has three main subunits: a(1), b(2) and c(9-12). The alpha and beta chains form an alternating ring which encloses part of the gamma chain. CF(1) is attached to CF(0) by a central stalk formed by the gamma and epsilon chains, while a peripheral stalk is formed by the delta and b chains.

The protein resides in the cell membrane. The enzyme catalyses ATP + H2O + 4 H(+)(in) = ADP + phosphate + 5 H(+)(out). Functionally, produces ATP from ADP in the presence of a proton gradient across the membrane. The catalytic sites are hosted primarily by the beta subunits. The protein is ATP synthase subunit beta of Staphylococcus aureus (strain MW2).